The primary structure comprises 467 residues: Glutamate--tRNA ligase (467 aa).

Positions 9 to 19 (PSPTGNLHIGS) match the 'HIGH' region motif. The 'KMSKS' region motif lies at 237-241 (KISKR). Residue K240 coordinates ATP.

The protein belongs to the class-I aminoacyl-tRNA synthetase family. Glutamate--tRNA ligase type 1 subfamily. Monomer.

The protein resides in the cytoplasm. It catalyses the reaction tRNA(Glu) + L-glutamate + ATP = L-glutamyl-tRNA(Glu) + AMP + diphosphate. Its function is as follows. Catalyzes the attachment of glutamate to tRNA(Glu) in a two-step reaction: glutamate is first activated by ATP to form Glu-AMP and then transferred to the acceptor end of tRNA(Glu). This Buchnera aphidicola subsp. Acyrthosiphon pisum (strain APS) (Acyrthosiphon pisum symbiotic bacterium) protein is Glutamate--tRNA ligase.